Here is a 114-residue protein sequence, read N- to C-terminus: Large ribosomal subunit protein uL18 (114 aa).

The protein belongs to the universal ribosomal protein uL18 family. In terms of assembly, part of the 50S ribosomal subunit; part of the 5S rRNA/L5/L18/L25 subcomplex. Contacts the 5S and 23S rRNAs.

In terms of biological role, this is one of the proteins that bind and probably mediate the attachment of the 5S RNA into the large ribosomal subunit, where it forms part of the central protuberance. The polypeptide is Large ribosomal subunit protein uL18 (Azobacteroides pseudotrichonymphae genomovar. CFP2).